Here is a 510-residue protein sequence, read N- to C-terminus: Probable cytosol aminopeptidase (510 aa).

Mn(2+) contacts are provided by Lys-254 and Asp-259. The active site involves Lys-266. The Mn(2+) site is built by Asp-277, Asp-336, and Glu-338. Residue Arg-340 is part of the active site. The disordered stretch occupies residues 487-510; it reads AQPVKASPKTRPARKSTPAAKTRA.

It belongs to the peptidase M17 family. Requires Mn(2+) as cofactor.

The protein localises to the cytoplasm. It catalyses the reaction Release of an N-terminal amino acid, Xaa-|-Yaa-, in which Xaa is preferably Leu, but may be other amino acids including Pro although not Arg or Lys, and Yaa may be Pro. Amino acid amides and methyl esters are also readily hydrolyzed, but rates on arylamides are exceedingly low.. The catalysed reaction is Release of an N-terminal amino acid, preferentially leucine, but not glutamic or aspartic acids.. Functionally, presumably involved in the processing and regular turnover of intracellular proteins. Catalyzes the removal of unsubstituted N-terminal amino acids from various peptides. The chain is Probable cytosol aminopeptidase from Polaromonas naphthalenivorans (strain CJ2).